The primary structure comprises 456 residues: Enolase (456 aa).

(2R)-2-phosphoglycerate is bound at residue Q164. E207 functions as the Proton donor in the catalytic mechanism. The Mg(2+) site is built by D244, E287, and D314. Residues K339, R368, S369, and K390 each coordinate (2R)-2-phosphoglycerate. Residue K339 is the Proton acceptor of the active site.

Belongs to the enolase family. Component of the RNA degradosome, a multiprotein complex involved in RNA processing and mRNA degradation. The cofactor is Mg(2+).

Its subcellular location is the cytoplasm. It localises to the secreted. The protein localises to the cell surface. The enzyme catalyses (2R)-2-phosphoglycerate = phosphoenolpyruvate + H2O. The protein operates within carbohydrate degradation; glycolysis; pyruvate from D-glyceraldehyde 3-phosphate: step 4/5. Functionally, catalyzes the reversible conversion of 2-phosphoglycerate (2-PG) into phosphoenolpyruvate (PEP). It is essential for the degradation of carbohydrates via glycolysis. The chain is Enolase from Francisella tularensis subsp. novicida (strain U112).